We begin with the raw amino-acid sequence, 810 residues long: Glycerol-3-phosphate acyltransferase (810 aa).

An HXXXXD motif motif is present at residues 305–310 (CHRSHI).

This sequence belongs to the GPAT/DAPAT family.

The protein localises to the cell inner membrane. It carries out the reaction sn-glycerol 3-phosphate + an acyl-CoA = a 1-acyl-sn-glycero-3-phosphate + CoA. It participates in phospholipid metabolism; CDP-diacylglycerol biosynthesis; CDP-diacylglycerol from sn-glycerol 3-phosphate: step 1/3. The protein is Glycerol-3-phosphate acyltransferase of Haemophilus influenzae (strain 86-028NP).